We begin with the raw amino-acid sequence, 273 residues long: Putative pyruvate, phosphate dikinase regulatory protein (273 aa).

Glycine 149 to threonine 156 lines the ADP pocket.

This sequence belongs to the pyruvate, phosphate/water dikinase regulatory protein family. PDRP subfamily.

It carries out the reaction N(tele)-phospho-L-histidyl/L-threonyl-[pyruvate, phosphate dikinase] + ADP = N(tele)-phospho-L-histidyl/O-phospho-L-threonyl-[pyruvate, phosphate dikinase] + AMP + H(+). It catalyses the reaction N(tele)-phospho-L-histidyl/O-phospho-L-threonyl-[pyruvate, phosphate dikinase] + phosphate + H(+) = N(tele)-phospho-L-histidyl/L-threonyl-[pyruvate, phosphate dikinase] + diphosphate. Functionally, bifunctional serine/threonine kinase and phosphorylase involved in the regulation of the pyruvate, phosphate dikinase (PPDK) by catalyzing its phosphorylation/dephosphorylation. This is Putative pyruvate, phosphate dikinase regulatory protein from Rickettsia bellii (strain RML369-C).